The sequence spans 221 residues: Glutathione S-transferase (221 aa).

Met-1 is modified (N-acetylmethionine). N-acetylalanine; in Glutathione S-transferase, N-terminally processed is present on Ala-2. Positions 3–82 (GEQNIKYFNI…YIAEKYNLLG (80 aa)) constitute a GST N-terminal domain. Residues Tyr-9, Lys-45, 53–54 (QV), and 66–67 (QT) contribute to the glutathione site. The GST C-terminal domain maps to 84-208 (DMKEHAQIIM…PGSKRKPVPD (125 aa)).

This sequence belongs to the GST superfamily. Alpha family. As to quaternary structure, homodimer or heterodimer of GSTA1 and GSTA2.

It localises to the cytoplasm. The catalysed reaction is RX + glutathione = an S-substituted glutathione + a halide anion + H(+). It catalyses the reaction prostaglandin A2 + glutathione = prostaglandin A2-S-(R)-glutathione. It carries out the reaction prostaglandin J2 + glutathione = prostaglandin J2-S-(R)-glutathione. The enzyme catalyses (13S)-hydroperoxy-(9Z,11E)-octadecadienoate + 2 glutathione = (13S)-hydroxy-(9Z,11E)-octadecadienoate + glutathione disulfide + H2O. The catalysed reaction is androst-5-ene-3,17-dione = androst-4-ene-3,17-dione. Functionally, glutathione S-transferase that catalyzes the nucleophilic attack of the sulfur atom of glutathione on the electrophilic groups of a wide range of exogenous and endogenous compounds. Involved in the formation of glutathione conjugates of both prostaglandin A2 (PGA2) and prostaglandin J2 (PGJ2). It also catalyzes the isomerization of D5-androstene-3,17-dione (AD) into D4-androstene-3,17-dione and may therefore play an important role in hormone biosynthesis. Through its glutathione-dependent peroxidase activity toward the fatty acid hydroperoxide (13S)-hydroperoxy-(9Z,11E)-octadecadienoate/13-HPODE it is also involved in the metabolism of oxidized linoleic acid. This chain is Glutathione S-transferase, found in Antechinus stuartii (Brown marsupial mouse).